A 373-amino-acid polypeptide reads, in one-letter code: Muscleblind-like protein 2 (373 aa).

4 C3H1-type zinc fingers span residues 13 to 41 (WLTLEVCRQFQRGTCSRSDEECKFAHPPK), 47 to 73 (NGRVIACFDSLKGRCSRENCKYLHPPT), 176 to 204 (TDKLEVCREFQRGNCARGETDCRFAHPAD), and 212 to 238 (DNTVTVCMDYIKGRCMREKCKYFHPPA).

Belongs to the muscleblind family. Interacts with ITGA3. In terms of tissue distribution, expressed in heart, brain, placenta, lung, liver, skeletal muscle, kidney and pancreas.

It is found in the nucleus. The protein localises to the cytoplasm. Its function is as follows. Mediates pre-mRNA alternative splicing regulation. Acts either as activator or repressor of splicing on specific pre-mRNA targets. Inhibits cardiac troponin-T (TNNT2) pre-mRNA exon inclusion but induces insulin receptor (IR) pre-mRNA exon inclusion in muscle. Antagonizes the alternative splicing activity pattern of CELF proteins. RNA-binding protein that binds to 5'ACACCC-3' core sequence, termed zipcode, within the 3'UTR of ITGA3. Binds to CUG triplet repeat expansion in myotonic dystrophy muscle cells by sequestering the target RNAs. Together with RNA binding proteins RBPMS and RBFOX2, activates vascular smooth muscle cells alternative splicing events. Regulates NCOR2 alternative splicing. Seems to regulate expression and localization of ITGA3 by transporting it from the nucleus to cytoplasm at adhesion plaques. May play a role in myotonic dystrophy pathophysiology (DM). In Homo sapiens (Human), this protein is Muscleblind-like protein 2 (MBNL2).